The chain runs to 109 residues: Mitochondrial pyruvate carrier 1 (109 aa).

An N-acetylalanine modification is found at alanine 2. Residues 2–20 are Mitochondrial matrix-facing; that stretch reads AGALVRKAADYVRSKDFRD. The helical transmembrane segment at 21 to 41 threads the bilayer; sequence YLMSTHFWGPVANWGLPIAAI. Over 42–52 the chain is Mitochondrial intermembrane; the sequence is NDMKKSPEIIS. A helical transmembrane segment spans residues 53-71; sequence GRMTFALCCYSLTFMRFAY. Lysine 72 carries the N6-acetyllysine modification. Over 72-109 the chain is Mitochondrial matrix; it reads KVQPRNWLLFACHVTNEVAQLIQGGRLINYEMSKRPSA.

The protein belongs to the mitochondrial pyruvate carrier (MPC) (TC 2.A.105) family. In terms of assembly, homodimer. Forms heterodimer with MPC2. The heterodimer is the more stable and dominant form.

It is found in the mitochondrion inner membrane. It carries out the reaction pyruvate(out) + H(+)(out) = pyruvate(in) + H(+)(in). Functionally, mediates the uptake of pyruvate into mitochondria. The polypeptide is Mitochondrial pyruvate carrier 1 (Mpc1) (Mus musculus (Mouse)).